The chain runs to 506 residues: 2,3-bisphosphoglycerate-independent phosphoglycerate mutase (506 aa).

Positions 12 and 63 each coordinate Mn(2+). Serine 63 functions as the Phosphoserine intermediate in the catalytic mechanism. Residues histidine 122, 151–152 (RD), arginine 182, arginine 188, 253–256 (RADR), and lysine 323 contribute to the substrate site. Residues aspartate 390, histidine 394, aspartate 432, histidine 433, and histidine 451 each coordinate Mn(2+).

This sequence belongs to the BPG-independent phosphoglycerate mutase family. As to quaternary structure, monomer. The cofactor is Mn(2+).

It catalyses the reaction (2R)-2-phosphoglycerate = (2R)-3-phosphoglycerate. Its pathway is carbohydrate degradation; glycolysis; pyruvate from D-glyceraldehyde 3-phosphate: step 3/5. Functionally, catalyzes the interconversion of 2-phosphoglycerate and 3-phosphoglycerate. This Wolbachia pipientis wMel protein is 2,3-bisphosphoglycerate-independent phosphoglycerate mutase.